A 469-amino-acid polypeptide reads, in one-letter code: Argininosuccinate lyase (469 aa).

This sequence belongs to the lyase 1 family. Argininosuccinate lyase subfamily.

It is found in the cytoplasm. The enzyme catalyses 2-(N(omega)-L-arginino)succinate = fumarate + L-arginine. It functions in the pathway amino-acid biosynthesis; L-arginine biosynthesis; L-arginine from L-ornithine and carbamoyl phosphate: step 3/3. In Burkholderia cenocepacia (strain HI2424), this protein is Argininosuccinate lyase.